Reading from the N-terminus, the 552-residue chain is Glutamate--tRNA ligase (552 aa).

A 'HIGH' region motif is present at residues 102–112 (PNPSGPLHIGH).

This sequence belongs to the class-I aminoacyl-tRNA synthetase family. Glutamate--tRNA ligase type 2 subfamily.

Its subcellular location is the cytoplasm. The enzyme catalyses tRNA(Glu) + L-glutamate + ATP = L-glutamyl-tRNA(Glu) + AMP + diphosphate. Catalyzes the attachment of glutamate to tRNA(Glu) in a two-step reaction: glutamate is first activated by ATP to form Glu-AMP and then transferred to the acceptor end of tRNA(Glu). The chain is Glutamate--tRNA ligase from Methanothermobacter marburgensis (strain ATCC BAA-927 / DSM 2133 / JCM 14651 / NBRC 100331 / OCM 82 / Marburg) (Methanobacterium thermoautotrophicum).